The primary structure comprises 1370 residues: DNA polymerase II large subunit (1370 aa).

2 disordered regions span residues 279 to 317 (IGADDADEDTPDAGSDSDATDEGDAPSASTDAEEPPRAA) and 1041 to 1081 (AGDA…DGGS).

This sequence belongs to the archaeal DNA polymerase II family. In terms of assembly, heterodimer of a large subunit and a small subunit. In terms of processing, this protein undergoes a protein self splicing that involves a post-translational excision of the intervening region (intein) followed by peptide ligation.

The enzyme catalyses DNA(n) + a 2'-deoxyribonucleoside 5'-triphosphate = DNA(n+1) + diphosphate. The catalysed reaction is Exonucleolytic cleavage in the 3'- to 5'-direction to yield nucleoside 5'-phosphates.. Functionally, possesses two activities: a DNA synthesis (polymerase) and an exonucleolytic activity that degrades single-stranded DNA in the 3'- to 5'-direction. Has a template-primer preference which is characteristic of a replicative DNA polymerase. The protein is DNA polymerase II large subunit (polC) of Halobacterium salinarum (strain ATCC 700922 / JCM 11081 / NRC-1) (Halobacterium halobium).